Consider the following 332-residue polypeptide: Long form salivary protein D7L2 (332 aa).

The signal sequence occupies residues 1 to 21 (MFPPRKFLLSSFILAALHVTA). 2 cysteine pairs are disulfide-bonded: C40–C77 and C73–C133. W61 is a binding site for leukotriene E4. The leukotriene E4 site is built by G157 and K176. 3 disulfide bridges follow: C184–C219, C200–C331, and C259–C278. Residues E185, R203, and H216 each coordinate noradrenaline. D294 and E297 together coordinate noradrenaline.

Belongs to the PBP/GOBP family. In terms of assembly, interacts with human CD4. As to expression, saliva (at protein level). Female salivary gland (at protein level). Detected in the head and thorax of the female mosquitoes, where the salivary glands are located.

It is found in the secreted. Modulates blood feeding of female mosquitoes on vertebrate species by binding and sequestering different mediators involved in the host response, such as biogenic amines and eicosanoids. Binds serotonin, histamine, tryptamine, noradrenaline, leukotriene B4, leukotriene C4, leukotriene D4, leukotriene E4 and U-46619, a stable analog of thromboxane A2. Does not bind adrenaline. Exhibits vasodilating activity. Inhibits agonist-induced platelet aggregation but not blood clotting. In terms of biological role, (Microbial infection) Probably promotes Plasmodium gallinaceum oocyst development in mosquito midgut. In Aedes aegypti (Yellowfever mosquito), this protein is Long form salivary protein D7L2.